The chain runs to 479 residues: Glycogen synthase (479 aa).

Lys16 lines the ADP-alpha-D-glucose pocket.

It belongs to the glycosyltransferase 1 family. Bacterial/plant glycogen synthase subfamily.

It carries out the reaction [(1-&gt;4)-alpha-D-glucosyl](n) + ADP-alpha-D-glucose = [(1-&gt;4)-alpha-D-glucosyl](n+1) + ADP + H(+). Its pathway is glycan biosynthesis; glycogen biosynthesis. Synthesizes alpha-1,4-glucan chains using ADP-glucose. The chain is Glycogen synthase from Lactiplantibacillus plantarum (strain ATCC BAA-793 / NCIMB 8826 / WCFS1) (Lactobacillus plantarum).